Consider the following 32-residue polypeptide: Tail virion protein G7P (32 aa).

Residues 8–28 (IIYVVFALGLVVSFGLGAITA) form a helical membrane-spanning segment.

The protein belongs to the inovirus G7P protein family.

It localises to the virion. Its subcellular location is the host membrane. Its function is as follows. May initiate with G9P the virion concomitant assembly-budding process, by interacting with the packaging signal of the viral genome. The assembly-budding takes place at the host inner membrane. In turn, G7P and G9P are present at the end of the filamentous virion that emerges first from the bacterial host. This Escherichia coli (Bacteriophage IKe) protein is Tail virion protein G7P (VII).